The following is an 89-amino-acid chain: MGEVVATLKIMPESPDVDLEALKAAIQAAMPAEAEFHKIEEEPIAFGLVALNLIFIIEDGEGGTESTEEAMAKLADVASVEITDTRRLM.

It belongs to the EF-1-beta/EF-1-delta family.

Functionally, promotes the exchange of GDP for GTP in EF-1-alpha/GDP, thus allowing the regeneration of EF-1-alpha/GTP that could then be used to form the ternary complex EF-1-alpha/GTP/AAtRNA. This is Elongation factor 1-beta from Methanobrevibacter smithii (strain ATCC 35061 / DSM 861 / OCM 144 / PS).